The primary structure comprises 386 residues: MFKSFNGLELKSSENEGRYLIATRDIQIGEDLLKCKSYFAVTSETLKTTSCFNCIKQLPSVIKLSLKCNQCNEIWYCNEQCKNENINKHQHYECKFYKKLKSPKLKVYPNFDIETFTEIRMIVGLLSRYYQDILLNNKFIEQQLNNNNNNNNDNEQLTNTLDDVFDLVENQVTEESNPAAKERIDSIVEFISELFNLVLLGSTTTKSIINNDDKIEMIRKINEKSRSIIHKTRCNQFGIWTKNDKCIGVAVSPSSSYFNHSCIPNCTDVRDGSNMTFKSLYPIKKGDQLTISYIELDQPIQDRKDELKYGYYFDCICPRCNGDSNSIDSMDNWISKFYCSQKKCTGLYYSKPMIPILNTLTSNHEIQLSCSNCNNINIVTPSFFNK.

Positions Asn-6–Ile-294 constitute an SET domain. Residues Cys-51 to Cys-94 form an MYND-type zinc finger. A coiled-coil region spans residues Asn-136–Gln-171.

The protein belongs to the class V-like SAM-binding methyltransferase superfamily.

Functionally, probable methyltransferase. The protein is SET and MYND domain-containing protein DDB_G0273589 of Dictyostelium discoideum (Social amoeba).